The chain runs to 238 residues: MRIDQRALDQLREVKITRNYTRYAEGSVLVEFGHTKVLCTASIDNSVPRFLKGQGQGWVTAEYGMLPRSTHSRCDREAARGKQTGRTQEIQRLIGRSLRAMVDLKKLGENTITIDCDVIQADGGTRTASITGAAVALVDAMNVLLAQKKIKQDPLKGLVAAISVGMYQDEVLLDLCYEEDSNCQTDLNVVMTQAGEFIEIQGTAEDKPFTRAQSNAMLEMAEKGIAELIKKQQEALGW.

Phosphate-binding positions include Arg-86 and 124–126; that span reads GTR.

It belongs to the RNase PH family. As to quaternary structure, homohexameric ring arranged as a trimer of dimers.

The catalysed reaction is tRNA(n+1) + phosphate = tRNA(n) + a ribonucleoside 5'-diphosphate. Phosphorolytic 3'-5' exoribonuclease that plays an important role in tRNA 3'-end maturation. Removes nucleotide residues following the 3'-CCA terminus of tRNAs; can also add nucleotides to the ends of RNA molecules by using nucleoside diphosphates as substrates, but this may not be physiologically important. Probably plays a role in initiation of 16S rRNA degradation (leading to ribosome degradation) during starvation. The sequence is that of Ribonuclease PH from Acinetobacter baumannii (strain AB307-0294).